The following is a 185-amino-acid chain: Putative manganese efflux pump MntP (185 aa).

Helical transmembrane passes span 6–26 (IFII…ACGL), 41–61 (FHFG…GLTV), 65–85 (VETY…GKMI), 107–127 (LVFL…SFSI), 132–152 (IAFP…FGLW), and 164–184 (SHIA…KLLL).

The protein belongs to the MntP (TC 9.B.29) family.

The protein localises to the cell inner membrane. Probably functions as a manganese efflux pump. The protein is Putative manganese efflux pump MntP of Maridesulfovibrio salexigens (strain ATCC 14822 / DSM 2638 / NCIMB 8403 / VKM B-1763) (Desulfovibrio salexigens).